The chain runs to 200 residues: Nitrile hydratase subunit alpha (200 aa).

Residues C105, C108, S109, and C110 each coordinate Fe(3+). A Cysteine sulfinic acid (-SO2H) modification is found at C108. C110 is subject to Cysteine sulfenic acid (-SOH).

This sequence belongs to the nitrile hydratase subunit alpha family. As to quaternary structure, heterodimer of an alpha and a beta chain. It depends on Fe(3+) as a cofactor. Post-translationally, oxidation on Cys-108 is essential for the activity. Oxidation on Cys-110 stabilizes the Fe-NO ligand coordinated in the inactive form.

The catalysed reaction is an aliphatic primary amide = an aliphatic nitrile + H2O. With respect to regulation, inactivated by oxidation of Cys-110 to a sulfenic acid. In terms of biological role, NHase catalyzes the hydration of various nitrile compounds to the corresponding amides. Industrial production of acrylamide is now being developed using some of the enzymes of this class. The sequence is that of Nitrile hydratase subunit alpha (nthA) from Pseudomonas chlororaphis (Pseudomonas aureofaciens).